The primary structure comprises 76 residues: Heat shock factor-binding protein 1 (76 aa).

This sequence belongs to the HSBP1 family. Homohexamer. Associates with heptad repeats of HSF1 trimers and probably also HSF1 monomers, and with HSP70. Association with HSF1 trimers and HSP70 coincides with attenuation of heat shock response and the conversion of HSF1 trimer to monomer.

The protein localises to the nucleus. Negative regulator of the heat shock response. Negatively affects HSF1 DNA-binding activity. May have a role in the suppression of the activation of the stress response during the aging process. This is Heat shock factor-binding protein 1 (HSBP1) from Pongo abelii (Sumatran orangutan).